A 546-amino-acid polypeptide reads, in one-letter code: Probable Dol-P-Man:Man(7)GlcNAc(2)-PP-Dol alpha-1,6-mannosyltransferase (546 aa).

The next 9 helical transmembrane spans lie at 5 to 25, 67 to 87, 113 to 133, 166 to 186, 200 to 220, 258 to 278, 283 to 303, 305 to 325, and 340 to 360; these read ESIC…YYSY, FIPS…VNPL, FGTL…HLVY, ILVF…MCLI, LLLV…LIDS, LPWL…FVYI, LLIY…HKEW, FIIY…SLCF, and LMFF…LYVF.

It belongs to the glycosyltransferase 22 family.

The protein resides in the endoplasmic reticulum membrane. The enzyme catalyses an alpha-D-Man-(1-&gt;2)-alpha-D-Man-(1-&gt;2)-alpha-D-Man-(1-&gt;3)-[alpha-D-Man-(1-&gt;2)-alpha-D-Man-(1-&gt;3)-alpha-D-Man-(1-&gt;6)]-beta-D-Man-(1-&gt;4)-beta-D-GlcNAc-(1-&gt;4)-alpha-D-GlcNAc-diphospho-di-trans,poly-cis-dolichol + a di-trans,poly-cis-dolichyl beta-D-mannosyl phosphate = an alpha-D-Man-(1-&gt;2)-alpha-D-Man-(1-&gt;2)-alpha-D-Man-(1-&gt;3)-[alpha-D-Man-(1-&gt;2)-alpha-D-Man-(1-&gt;3)-[alpha-D-Man-(1-&gt;6)]-alpha-D-Man-(1-&gt;6)]-beta-D-Man-(1-&gt;4)-beta-D-GlcNAc-(1-&gt;4)-alpha-D-GlcNAc-diphospho-di-trans,poly-cis-dolichol + a di-trans,poly-cis-dolichyl phosphate + H(+). It functions in the pathway protein modification; protein glycosylation. Its function is as follows. Mannosyltransferase that operates in the biosynthetic pathway of dolichol-linked oligosaccharides, the glycan precursors employed in protein asparagine (N)-glycosylation. The assembly of dolichol-linked oligosaccharides begins on the cytosolic side of the endoplasmic reticulum membrane and finishes in its lumen. The sequential addition of sugars to dolichol pyrophosphate produces dolichol-linked oligosaccharides containing fourteen sugars, including two GlcNAcs, nine mannoses and three glucoses. Once assembled, the oligosaccharide is transferred from the lipid to nascent proteins by oligosaccharyltransferases. In the lumen of the endoplasmic reticulum, adds the eighth mannose residue in an alpha-1,6 linkage onto Man(7)GlcNAc(2)-PP-dolichol to produce Man(8)GlcNAc(2)-PP-dolichol. This Schizosaccharomyces pombe (strain 972 / ATCC 24843) (Fission yeast) protein is Probable Dol-P-Man:Man(7)GlcNAc(2)-PP-Dol alpha-1,6-mannosyltransferase (alg12).